The chain runs to 242 residues: Segregation and condensation protein A (242 aa).

The protein belongs to the ScpA family. As to quaternary structure, component of a cohesin-like complex composed of ScpA, ScpB and the Smc homodimer, in which ScpA and ScpB bind to the head domain of Smc. The presence of the three proteins is required for the association of the complex with DNA.

Its subcellular location is the cytoplasm. Functionally, participates in chromosomal partition during cell division. May act via the formation of a condensin-like complex containing Smc and ScpB that pull DNA away from mid-cell into both cell halves. This is Segregation and condensation protein A from Lactococcus lactis subsp. lactis (strain IL1403) (Streptococcus lactis).